Consider the following 189-residue polypeptide: MDRLKQSLLDAPVIEKEEYQYFVHPISDGVPMLRPELLREIVIRIIRKAELEDVDKIVTPAAMGIHISTAVSLMTDIPLVVIRKRQYGLEGEVSLQQVTGYSESEMYVNDVYEGDKVLVLDDVLSTGGTLAGITGALEEIGAEIVDIVAVIKKVGGENKIDDSDFDVKTLINVDVEDMEVIIVDEQGDG.

Belongs to the purine/pyrimidine phosphoribosyltransferase family. Archaeal HPRT subfamily.

In terms of biological role, may catalyze a purine salvage reaction, the substrate is unknown. This is HGPRTase-like protein from Halorhabdus utahensis (strain DSM 12940 / JCM 11049 / AX-2).